The sequence spans 197 residues: MSHFFAHLSRLKLINRWPLMRNVRTENVSEHSLQVAFVAHALAIIKNRKFNGNLNAERIALLAMYHDASEVITGDLPTPIKYHNPKIAHEYKKIEKVAQQKLIEMLPKELQHDFRCLLDEHYYSEEEKALVKQADALCAYLKCLEELSAGNNEFIQAKARLEKTLAIRQSPEMDYFMAVFVPSFSLSLDEISLDSLD.

Substrate-binding positions include 16 to 17 and histidine 31; that span reads RW. An HD domain is found at 28–140; that stretch reads VSEHSLQVAF…VKQADALCAY (113 aa). Positions 31, 66, and 67 each coordinate a divalent metal cation. Residues aspartate 67, 75-78, and aspartate 135 contribute to the substrate site; that span reads DLPT. Residue aspartate 135 coordinates a divalent metal cation.

This sequence belongs to the 5DNU family. In terms of assembly, homodimer. The cofactor is a divalent metal cation.

The protein localises to the cytoplasm. It catalyses the reaction a 2'-deoxyribonucleoside 5'-phosphate + H2O = a 2'-deoxyribonucleoside + phosphate. Its function is as follows. Catalyzes the strictly specific dephosphorylation of 2'-deoxyribonucleoside 5'-monophosphates. The sequence is that of 5'-deoxynucleotidase YpsIP31758_1449 from Yersinia pseudotuberculosis serotype O:1b (strain IP 31758).